The sequence spans 430 residues: MAEKILENKDPKLEAMTVDHEVSAPKPIPVDEPTLTRVARPLRHVRHIPVKSLVFHSKHGPITFSYENKIKLPISKNKLVVQVNYVGLNPVDMKIRNGYTKPIYGEAGIGREYSGVITHVGDNLTNRWNVGDDVYGIYYHPKLAIGALQSSLLIDPRVDPILMRPKNTLSPEKAAGSLFCLGTALNLLAQLKEKDQLNTESNVLINGGTSSVGMFAIQLLKRYYKVSKKLVVVTSGNGAAVLSEHFPDLKDEIIFINYLSCRGKSSKPLRRMLDTGKVVDYDDFNTLKETEDYTQGKFNVVLDFIGGYDILSHSSSLIHAKGAYITTVGDYVGNYKKDVFDSWDNPSANARKMFGSMLWSYDYSHFYFDPNIKIIPKKNDWIHECGKLLNEGVVDCVVDKVYSWKNFKEAFSYMATQRAQGKLIMKVEGF.

In terms of biological role, lipid raft-associated protein involved in the targeting of PMA1 from Golgi to the plasma membrane. May induce clustering of PMA1, which facilitates partition of PMA1 into lipid rafts after leaving the ER its and transport to the cell surface. In Saccharomyces cerevisiae (strain ATCC 204508 / S288c) (Baker's yeast), this protein is Protein AST2.